Here is a 421-residue protein sequence, read N- to C-terminus: Serine hydroxymethyltransferase (421 aa).

Residues leucine 123 and glycine 127 to leucine 129 contribute to the (6S)-5,6,7,8-tetrahydrofolate site. Lysine 232 is modified (N6-(pyridoxal phosphate)lysine).

Belongs to the SHMT family. In terms of assembly, homodimer. It depends on pyridoxal 5'-phosphate as a cofactor.

It localises to the cytoplasm. It catalyses the reaction (6R)-5,10-methylene-5,6,7,8-tetrahydrofolate + glycine + H2O = (6S)-5,6,7,8-tetrahydrofolate + L-serine. It participates in one-carbon metabolism; tetrahydrofolate interconversion. Its pathway is amino-acid biosynthesis; glycine biosynthesis; glycine from L-serine: step 1/1. In terms of biological role, catalyzes the reversible interconversion of serine and glycine with tetrahydrofolate (THF) serving as the one-carbon carrier. This reaction serves as the major source of one-carbon groups required for the biosynthesis of purines, thymidylate, methionine, and other important biomolecules. Also exhibits THF-independent aldolase activity toward beta-hydroxyamino acids, producing glycine and aldehydes, via a retro-aldol mechanism. The protein is Serine hydroxymethyltransferase of Ehrlichia canis (strain Jake).